The chain runs to 543 residues: Hydroxylamine reductase (543 aa).

Cys-5, Cys-8, Cys-17, and Cys-23 together coordinate [4Fe-4S] cluster. Residues His-236, Glu-260, Cys-304, Cys-398, Cys-426, Cys-451, Glu-486, and Lys-488 each coordinate hybrid [4Fe-2O-2S] cluster. At Cys-398 the chain carries Cysteine persulfide.

It belongs to the HCP family. [4Fe-4S] cluster serves as cofactor. The cofactor is hybrid [4Fe-2O-2S] cluster.

It localises to the cytoplasm. The enzyme catalyses A + NH4(+) + H2O = hydroxylamine + AH2 + H(+). Its function is as follows. Catalyzes the reduction of hydroxylamine to form NH(3) and H(2)O. This is Hydroxylamine reductase from Bacteroides thetaiotaomicron (strain ATCC 29148 / DSM 2079 / JCM 5827 / CCUG 10774 / NCTC 10582 / VPI-5482 / E50).